Reading from the N-terminus, the 757-residue chain is MDFEANEDLNGVRFSWNVFPSSKTDANKNVVPVGCLYTPLKEIEDLQIASYNPVVCAGPQCKAILNPYCAIDPRSSSWTCPICNSRNHLPPQYANMTQENMPIELQQTTVEYITNKPVQIPPIFFFVVDITAEQENLDALKESIITSLSLLPPNALIGFMTYGNVVQLYDLSCDIIERCSVFRGDREYQFDQLVEMLTGQKPSNTMAPLANGKITPLSLNRFFLPLEQVEFKLNQLLESMSPDQWSVPAGHRPLRATGSALNIATLLLQGCYKNVASRIILFASGPGTVAPGLIVNTELKDPIRSHHDIDSDRAPHYKKACKFYNSIAERVAENGHTVDVFAGCYDQVGMSEMKKMTDSTGGVLLLTDAFSTAIFKQSYLRLFSKDEEGYLTMVFNGNLAVKTSKDLKLQGLIGHASAVKKTDATNVSDSEIGIGSTSVWKMSALSPHHTYGIFFEIANPNAVSPITTDRANLAYTQFITQYQHASGTNRVRVTTVANQMLPFGTPAIAASFDQEAAAVLMARIAVFKAETDDGADVIRWLDRTLIKLCQKYADYNKDDPASFRLAPNFSLYPQFTYYLRRSQFLSVFNNSPDETAFYRHIFTREDTTNSLIMIQPTLTSFSMEEDPQPVLLDSISVKPNTILLLDTFFFILIYHGEQIAQWRKAGYQDDPQYADFKALLEEPKVEAAELLVDRFPLPRFIDTEAGGSQARFLLSKLNPSDNYQDMARGGSTIVLTDDVSLQNFMAHLQQVTVSGQP.

Residues Cys-56, Cys-61, Cys-80, and Cys-83 each contribute to the Zn(2+) site.

It belongs to the SEC23/SEC24 family. SEC23 subfamily. In terms of assembly, the COPII coat is composed of at least 5 proteins: the SEC23/24 complex, the SEC13/31 complex, and the protein SAR1.

It localises to the cytoplasm. The protein resides in the cytoplasmic vesicle. Its subcellular location is the COPII-coated vesicle membrane. The protein localises to the endoplasmic reticulum membrane. It is found in the golgi apparatus membrane. Functionally, component of the coat protein complex II (COPII) which promotes the formation of transport vesicles from the endoplasmic reticulum (ER). The coat has two main functions, the physical deformation of the endoplasmic reticulum membrane into vesicles and the selection of cargo molecules. This Candida glabrata (strain ATCC 2001 / BCRC 20586 / JCM 3761 / NBRC 0622 / NRRL Y-65 / CBS 138) (Yeast) protein is Protein transport protein SEC23-2 (SEC232).